Consider the following 89-residue polypeptide: Acylphosphatase (89 aa).

Residues 3–89 enclose the Acylphosphatase-like domain; it reads CKRWILYGRV…GNYGSFHIEY (87 aa). Active-site residues include Arg-18 and Asn-36.

It belongs to the acylphosphatase family.

The catalysed reaction is an acyl phosphate + H2O = a carboxylate + phosphate + H(+). This Petrotoga mobilis (strain DSM 10674 / SJ95) protein is Acylphosphatase (acyP).